The primary structure comprises 234 residues: Probable transcriptional regulatory protein Psyr_3028 (234 aa).

The protein belongs to the TACO1 family.

The protein localises to the cytoplasm. This is Probable transcriptional regulatory protein Psyr_3028 from Pseudomonas syringae pv. syringae (strain B728a).